A 259-amino-acid chain; its full sequence is Probable dihydroorotate dehydrogenase B (NAD(+)), electron transfer subunit (259 aa).

The FAD-binding FR-type domain maps to 1–89; sequence MLPLNATIVQ…RGPFGKGFSL (89 aa). [2Fe-2S] cluster-binding residues include cysteine 211, cysteine 216, cysteine 219, and cysteine 229.

Belongs to the PyrK family. Heterotetramer of 2 PyrK and 2 PyrD type B subunits. [2Fe-2S] cluster serves as cofactor. Requires FAD as cofactor.

The protein operates within pyrimidine metabolism; UMP biosynthesis via de novo pathway; orotate from (S)-dihydroorotate (NAD(+) route): step 1/1. Responsible for channeling the electrons from the oxidation of dihydroorotate from the FMN redox center in the PyrD type B subunit to the ultimate electron acceptor NAD(+). The sequence is that of Probable dihydroorotate dehydrogenase B (NAD(+)), electron transfer subunit from Methanosarcina barkeri (strain Fusaro / DSM 804).